The chain runs to 156 residues: MSRRHKAERREVIPDPKYGSTTLSRFMNSVMRDGKKSVAEGIVYGALDVVETKAKHDPVDVFIQALENVAPAVEVRSRRVGGATYQVPVEVRNERRQTLAIRWLIASARARNEKTMVERLSAELLDAANNRGAAVKKREDTHRMAEANRAFSHYRW.

This sequence belongs to the universal ribosomal protein uS7 family. Part of the 30S ribosomal subunit. Contacts proteins S9 and S11.

In terms of biological role, one of the primary rRNA binding proteins, it binds directly to 16S rRNA where it nucleates assembly of the head domain of the 30S subunit. Is located at the subunit interface close to the decoding center, probably blocks exit of the E-site tRNA. This chain is Small ribosomal subunit protein uS7, found in Xanthobacter autotrophicus (strain ATCC BAA-1158 / Py2).